The chain runs to 221 residues: Ras-related protein Rab-28 (221 aa).

The residue at position 2 (S2) is an N-acetylserine. S8 is subject to Phosphoserine. GTP is bound by residues G21, G24, K25, T26, S27, G38, K39, Y41, and T44. Mg(2+) is bound at residue T26. A switch I region spans residues 35–49; it reads ETFGKQYKQTIGLDF. Mg(2+)-binding residues include T44 and D68. Residues 68–85 form a switch II region; the sequence is DIGGQTIGGKMLDKYIYG. Residues G71, N129, K130, D132, A160, and K161 each coordinate GTP. C218 is subject to Cysteine methyl ester. C218 carries S-farnesyl cysteine lipidation. Residues 219–221 constitute a propeptide, removed in mature form; sequence AVQ.

Belongs to the small GTPase superfamily. Rab family. In terms of assembly, interacts (prenylated form) with PDE6D; the interaction promotes RAB28 delivery to the photoreceptor outer segments. Interacts with KCNJ13; the interaction may facilitate cone outer segments phagocytosis. Interacts with RELA; the interaction contributes to RELA transport from cytoplasm to nucleus. The cofactor is Mg(2+). In terms of processing, isoprenylated. Testis, brain, and to much lower levels heart, skeletal muscle and fat cells. Expressed in the retina.

It is found in the cell membrane. Its subcellular location is the cytoplasm. The protein localises to the cytoskeleton. It localises to the cilium basal body. The protein resides in the nucleus. It carries out the reaction GTP + H2O = GDP + phosphate + H(+). Regulated by guanine nucleotide exchange factors (GEFs) which promote the exchange of bound GDP for free GTP. Regulated by GTPase activating proteins (GAPs) which increase the GTP hydrolysis activity. Inhibited by GDP dissociation inhibitors (GDIs). The small GTPases Rab are key regulators of intracellular membrane trafficking, from the formation of transport vesicles to their fusion with membranes. Rabs cycle between an inactive GDP-bound form and an active GTP-bound form that is able to recruit to membranes different sets of downstream effectors directly responsible for vesicle formation, movement, tethering and fusion. RAB28 is required for shedding and phagocytosis of cone cell outer segments (OS) discs in the retina. Also participates in nuclear factor kappa-B p65/RELA nuclear transport in endothelial cells. The protein is Ras-related protein Rab-28 of Rattus norvegicus (Rat).